We begin with the raw amino-acid sequence, 128 residues long: Flagellar assembly factor FliW (128 aa).

This sequence belongs to the FliW family. Interacts with translational regulator CsrA and flagellin(s).

The protein resides in the cytoplasm. Functionally, acts as an anti-CsrA protein, binds CsrA and prevents it from repressing translation of its target genes, one of which is flagellin. Binds to flagellin and participates in the assembly of the flagellum. The polypeptide is Flagellar assembly factor FliW (Campylobacter fetus subsp. fetus (strain 82-40)).